A 276-amino-acid chain; its full sequence is MHPAAEHSPLGKSSEYIATYMPSLLFPIPRTAKWAELGVTAQTLPWHGVDYWNCFELSWLLPSGKPVVAIGEFAIPADSPNIIESKSFKLYLNSLNQTVFATIGELQACLEKDLSAAAGKPVSVQVRTLAEVEAQGVVALPGQCIDALDVTISNYEQPQPELLRCNPERVVEETLHSHLLKSNCPVTGQPDWGSVVVEYKGRALDHASLLTYLISFRQHADFHEQCVERIYLDLKNLLQPEHLTVYARYVRRGGLDINPYRSTGAISPENVRLVRQ.

83–85 (IES) lines the substrate pocket. Residue 85–86 (SK) coordinates NADPH. Residue C184 is the Thioimide intermediate of the active site. Catalysis depends on D191, which acts as the Proton donor. 223-224 (HE) is a substrate binding site. Residue 252–253 (RG) coordinates NADPH.

It belongs to the GTP cyclohydrolase I family. QueF type 2 subfamily. In terms of assembly, homodimer.

It is found in the cytoplasm. The enzyme catalyses 7-aminomethyl-7-carbaguanine + 2 NADP(+) = 7-cyano-7-deazaguanine + 2 NADPH + 3 H(+). Its pathway is tRNA modification; tRNA-queuosine biosynthesis. Catalyzes the NADPH-dependent reduction of 7-cyano-7-deazaguanine (preQ0) to 7-aminomethyl-7-deazaguanine (preQ1). This is NADPH-dependent 7-cyano-7-deazaguanine reductase from Pseudomonas putida (strain W619).